Here is a 213-residue protein sequence, read N- to C-terminus: Uracil phosphoribosyltransferase (213 aa).

Residues Arg-78, Arg-103, and Asp-131–Thr-139 contribute to the 5-phospho-alpha-D-ribose 1-diphosphate site. Residues Ile-197 and Gly-202–Ala-204 contribute to the uracil site. Asp-203 provides a ligand contact to 5-phospho-alpha-D-ribose 1-diphosphate.

Belongs to the UPRTase family. It depends on Mg(2+) as a cofactor.

It catalyses the reaction UMP + diphosphate = 5-phospho-alpha-D-ribose 1-diphosphate + uracil. It participates in pyrimidine metabolism; UMP biosynthesis via salvage pathway; UMP from uracil: step 1/1. Allosterically activated by GTP. Catalyzes the conversion of uracil and 5-phospho-alpha-D-ribose 1-diphosphate (PRPP) to UMP and diphosphate. The chain is Uracil phosphoribosyltransferase from Bifidobacterium adolescentis (strain ATCC 15703 / DSM 20083 / NCTC 11814 / E194a).